The primary structure comprises 465 residues: ATP synthase subunit beta (465 aa).

151 to 158 (GGAGVGKT) contributes to the ATP binding site.

This sequence belongs to the ATPase alpha/beta chains family. As to quaternary structure, F-type ATPases have 2 components, CF(1) - the catalytic core - and CF(0) - the membrane proton channel. CF(1) has five subunits: alpha(3), beta(3), gamma(1), delta(1), epsilon(1). CF(0) has four main subunits: a(1), b(1), b'(1) and c(9-12).

It is found in the cell inner membrane. It catalyses the reaction ATP + H2O + 4 H(+)(in) = ADP + phosphate + 5 H(+)(out). Functionally, produces ATP from ADP in the presence of a proton gradient across the membrane. The catalytic sites are hosted primarily by the beta subunits. This Chloroherpeton thalassium (strain ATCC 35110 / GB-78) protein is ATP synthase subunit beta.